Here is a 311-residue protein sequence, read N- to C-terminus: Cell division protein ZipA (311 aa).

Residues 1–6 (MENLQL) lie on the Periplasmic side of the membrane. Residues 7–27 (VLFVLGAIAIIAVLVHGFWSI) traverse the membrane as a helical segment. Residues 28-311 (RKQQPKSLKE…YLQRIRAQLD (284 aa)) are Cytoplasmic-facing. Positions 46–114 (DQASVRDSQG…FALSDEPVQR (69 aa)) are disordered. 2 stretches are compositionally biased toward basic and acidic residues: residues 62-83 (GEVRVRKEVPATDRQEKEDKPV) and 94-103 (RDVEDSRHEQ).

It belongs to the ZipA family. Interacts with FtsZ via their C-terminal domains.

Its subcellular location is the cell inner membrane. In terms of biological role, essential cell division protein that stabilizes the FtsZ protofilaments by cross-linking them and that serves as a cytoplasmic membrane anchor for the Z ring. Also required for the recruitment to the septal ring of downstream cell division proteins. In Shewanella woodyi (strain ATCC 51908 / MS32), this protein is Cell division protein ZipA.